Consider the following 369-residue polypeptide: Glutamate 5-kinase (369 aa).

An ATP-binding site is contributed by Lys9. Positions 49, 136, and 148 each coordinate substrate. ATP is bound by residues 168–169 (TD) and 210–216 (TGGMLTK). The 81-residue stretch at 275–355 (RGSVYVDEGA…KGVFIHRDDW (81 aa)) folds into the PUA domain.

The protein belongs to the glutamate 5-kinase family.

Its subcellular location is the cytoplasm. It catalyses the reaction L-glutamate + ATP = L-glutamyl 5-phosphate + ADP. It participates in amino-acid biosynthesis; L-proline biosynthesis; L-glutamate 5-semialdehyde from L-glutamate: step 1/2. Catalyzes the transfer of a phosphate group to glutamate to form L-glutamate 5-phosphate. The protein is Glutamate 5-kinase of Neisseria meningitidis serogroup C / serotype 2a (strain ATCC 700532 / DSM 15464 / FAM18).